A 146-amino-acid polypeptide reads, in one-letter code: Large ribosomal subunit protein bL21 (146 aa).

Residues 103–146 are disordered; it reads DGKSPTIGPRPKKEKAVEPVEGASDDKPRRAAKKTAAKTAEDAD. The segment covering 116-131 has biased composition (basic and acidic residues); the sequence is EKAVEPVEGASDDKPR.

The protein belongs to the bacterial ribosomal protein bL21 family. Part of the 50S ribosomal subunit. Contacts protein L20.

This protein binds to 23S rRNA in the presence of protein L20. This chain is Large ribosomal subunit protein bL21, found in Nitrobacter winogradskyi (strain ATCC 25391 / DSM 10237 / CIP 104748 / NCIMB 11846 / Nb-255).